We begin with the raw amino-acid sequence, 328 residues long: Tetraacyldisaccharide 4'-kinase (328 aa).

Residue 55-62 (TAGGNGKT) coordinates ATP.

The protein belongs to the LpxK family.

The catalysed reaction is a lipid A disaccharide + ATP = a lipid IVA + ADP + H(+). It participates in glycolipid biosynthesis; lipid IV(A) biosynthesis; lipid IV(A) from (3R)-3-hydroxytetradecanoyl-[acyl-carrier-protein] and UDP-N-acetyl-alpha-D-glucosamine: step 6/6. Its function is as follows. Transfers the gamma-phosphate of ATP to the 4'-position of a tetraacyldisaccharide 1-phosphate intermediate (termed DS-1-P) to form tetraacyldisaccharide 1,4'-bis-phosphate (lipid IVA). The sequence is that of Tetraacyldisaccharide 4'-kinase from Escherichia coli O6:K15:H31 (strain 536 / UPEC).